A 307-amino-acid polypeptide reads, in one-letter code: Acetaldehyde dehydrogenase 1 (307 aa).

C132 (acyl-thioester intermediate) is an active-site residue. NAD(+) is bound by residues 163–171 (SVGPGTRKN) and N274.

Belongs to the acetaldehyde dehydrogenase family.

The catalysed reaction is acetaldehyde + NAD(+) + CoA = acetyl-CoA + NADH + H(+). This chain is Acetaldehyde dehydrogenase 1 (tesF), found in Comamonas testosteroni (Pseudomonas testosteroni).